A 328-amino-acid chain; its full sequence is Beta-ribofuranosylphenol 5'-phosphate synthase (328 aa).

This sequence belongs to the beta-RFA-P synthase family. In terms of assembly, homodimer. The cofactor is Mg(2+).

The catalysed reaction is 5-phospho-alpha-D-ribose 1-diphosphate + 4-hydroxybenzoate + H(+) = 4-(beta-D-ribofuranosyl)phenol 5'-phosphate + CO2 + diphosphate. The enzyme catalyses 4-aminobenzoate + 5-phospho-alpha-D-ribose 1-diphosphate + H(+) = 4-(beta-D-ribofuranosyl)aminobenzene 5'-phosphate + CO2 + diphosphate. It functions in the pathway cofactor biosynthesis; 5,6,7,8-tetrahydromethanopterin biosynthesis. Catalyzes the condensation of 4-hydroxybenzoate (HB) with 5-phospho-alpha-D-ribose 1-diphosphate (PRPP) to produce beta-ribofuranosylphenol 5'-phosphate (beta-RFH-P). Also catalyzes the condensation of 4-aminobenzoate (pABA) with PRPP to produce beta-ribofuranosylaminobenzene 5'-phosphate (beta-RFA-P). Only 4-hydroxybenzoate is known to be biosynthesized by methanogenic archaea, but 4-aminobenzoate can be used as substrate by growing methanogens when it is present in the growth medium. The chain is Beta-ribofuranosylphenol 5'-phosphate synthase from Methanocaldococcus jannaschii (strain ATCC 43067 / DSM 2661 / JAL-1 / JCM 10045 / NBRC 100440) (Methanococcus jannaschii).